The chain runs to 194 residues: Holliday junction branch migration complex subunit RuvA (194 aa).

The domain I stretch occupies residues 1 to 63; the sequence is MFEYLYGTVE…EDTYKLIGFL (63 aa). The tract at residues 64-142 is domain II; the sequence is DERDRKIFEL…NLTYTEEETV (79 aa). The flexible linker stretch occupies residues 143–147; sequence SMDML. The domain III stretch occupies residues 147–194; it reads LEDLVLALEGLGYNKKEIDKTLEKIDLNKFSSLEDAIKGILKNMRIGD.

It belongs to the RuvA family. Homotetramer. Forms an RuvA(8)-RuvB(12)-Holliday junction (HJ) complex. HJ DNA is sandwiched between 2 RuvA tetramers; dsDNA enters through RuvA and exits via RuvB. An RuvB hexamer assembles on each DNA strand where it exits the tetramer. Each RuvB hexamer is contacted by two RuvA subunits (via domain III) on 2 adjacent RuvB subunits; this complex drives branch migration. In the full resolvosome a probable DNA-RuvA(4)-RuvB(12)-RuvC(2) complex forms which resolves the HJ.

It localises to the cytoplasm. In terms of biological role, the RuvA-RuvB-RuvC complex processes Holliday junction (HJ) DNA during genetic recombination and DNA repair, while the RuvA-RuvB complex plays an important role in the rescue of blocked DNA replication forks via replication fork reversal (RFR). RuvA specifically binds to HJ cruciform DNA, conferring on it an open structure. The RuvB hexamer acts as an ATP-dependent pump, pulling dsDNA into and through the RuvAB complex. HJ branch migration allows RuvC to scan DNA until it finds its consensus sequence, where it cleaves and resolves the cruciform DNA. This Fusobacterium nucleatum subsp. nucleatum (strain ATCC 25586 / DSM 15643 / BCRC 10681 / CIP 101130 / JCM 8532 / KCTC 2640 / LMG 13131 / VPI 4355) protein is Holliday junction branch migration complex subunit RuvA.